The sequence spans 153 residues: SKP1-like protein 5 (153 aa).

An interaction with the F-box domain of F-box proteins region spans residues 90–153 (MMAANYLNIQ…IREENQWAFQ (64 aa)).

It belongs to the SKP1 family. Part of a SCF (SKP1-cullin-F-box) protein ligase complex. Interacts with PP2A13. Restricted to inflorescences, especially in the inflorescence meristem (IM).

It is found in the nucleus. Its pathway is protein modification; protein ubiquitination. Its function is as follows. Involved in ubiquitination and subsequent proteasomal degradation of target proteins. Together with CUL1, RBX1 and a F-box protein, it forms a SCF E3 ubiquitin ligase complex. The functional specificity of this complex depends on the type of F-box protein. In the SCF complex, it serves as an adapter that links the F-box protein to CUL1. This is SKP1-like protein 5 (ASK5) from Arabidopsis thaliana (Mouse-ear cress).